The following is a 448-amino-acid chain: T-box transcription factor T homolog 1 (448 aa).

The T-box DNA-binding region spans 54–224 (LWDKFNALTN…YNPFAKAFLD (171 aa)). Disordered regions lie at residues 290–312 (APYP…TAAS) and 401–448 (TTAS…PPSL). Positions 417 to 442 (STDSGYGHSTTPPAPQTRITSNNWSP) are enriched in polar residues.

The protein localises to the nucleus. Functionally, involved in the transcriptional regulation of genes required for mesoderm formation and differentiation. The polypeptide is T-box transcription factor T homolog 1 (Branchiostoma floridae (Florida lancelet)).